Here is a 658-residue protein sequence, read N- to C-terminus: Protein translocase subunit SecA 3 (658 aa).

Residues glutamine 111, 129–133 (GEGKT), and aspartate 536 each bind ATP.

This sequence belongs to the SecA family. Monomer and homodimer. Part of the essential Sec protein translocation apparatus which comprises SecA, SecYEG and auxiliary proteins SecDF-YajC and YidC.

The protein resides in the cell inner membrane. It is found in the cytoplasm. It catalyses the reaction ATP + H2O + cellular proteinSide 1 = ADP + phosphate + cellular proteinSide 2.. Part of the Sec protein translocase complex. Interacts with the SecYEG preprotein conducting channel. Has a central role in coupling the hydrolysis of ATP to the transfer of proteins into and across the cell membrane, serving both as a receptor for the preprotein-SecB complex and as an ATP-driven molecular motor driving the stepwise translocation of polypeptide chains across the membrane. The sequence is that of Protein translocase subunit SecA 3 from Magnetococcus marinus (strain ATCC BAA-1437 / JCM 17883 / MC-1).